A 551-amino-acid polypeptide reads, in one-letter code: ATP-dependent DNA helicase XPD (551 aa).

One can recognise a Helicase ATP-binding domain in the interval 1–228 (MLKLRDWQEK…KLLNQLREVV (228 aa)). 29 to 36 (APTGSGKT) is a binding site for ATP. [4Fe-4S] cluster-binding residues include Cys88, Cys102, Cys105, and Cys137. The DEAH box motif lies at 180 to 183 (DEAH).

The protein belongs to the helicase family. RAD3/XPD subfamily. As to quaternary structure, monomer. [4Fe-4S] cluster serves as cofactor.

The enzyme catalyses Couples ATP hydrolysis with the unwinding of duplex DNA at the replication fork by translocating in the 5'-3' direction. This creates two antiparallel DNA single strands (ssDNA). The leading ssDNA polymer is the template for DNA polymerase III holoenzyme which synthesizes a continuous strand.. It catalyses the reaction ATP + H2O = ADP + phosphate + H(+). ATP-dependent 5'-3' DNA helicase. Thought to be involved in nucleotide excision repair (NER) of DNA. The protein is ATP-dependent DNA helicase XPD of Sulfolobus acidocaldarius (strain ATCC 33909 / DSM 639 / JCM 8929 / NBRC 15157 / NCIMB 11770).